The sequence spans 444 residues: Putative zinc metalloprotease PD_0327 (444 aa).

Residue histidine 22 participates in Zn(2+) binding. Glutamate 23 is an active-site residue. A Zn(2+)-binding site is contributed by histidine 26. The helical transmembrane segment at 98–120 threads the bilayer; sequence IAIVAAGPLANLLLCMLLLWVLF. A PDZ domain is found at 192 to 278; sequence TLELSKLKQP…HPGMIEIRRG (87 aa). A run of 2 helical transmembrane segments spans residues 371 to 393 and 418 to 440; these read VGWF…LFPI and AMAA…AFYN.

This sequence belongs to the peptidase M50B family. Zn(2+) is required as a cofactor.

The protein localises to the cell inner membrane. The sequence is that of Putative zinc metalloprotease PD_0327 from Xylella fastidiosa (strain Temecula1 / ATCC 700964).